The chain runs to 91 residues: MTRMVNCVKLGREAEGLAFQPVPGDLGKKIFENVSKEAWAGWQRHQTMLINENRLNLADPQARSYLMEQMERYFFGGGNVDAAAGYVPPTR.

The protein belongs to the Fe(2+)-trafficking protein family.

Its function is as follows. Could be a mediator in iron transactions between iron acquisition and iron-requiring processes, such as synthesis and/or repair of Fe-S clusters in biosynthetic enzymes. The chain is Probable Fe(2+)-trafficking protein from Thiobacillus denitrificans (strain ATCC 25259 / T1).